We begin with the raw amino-acid sequence, 323 residues long: Transposase for insertion sequence element IS6120 (323 aa).

The tract at residues 300–323 (ERPTDITPPTSPSDGGQHAGTEVA) is disordered. The segment covering 304 to 313 (DITPPTSPSD) has biased composition (low complexity).

It belongs to the transposase mutator family.

In terms of biological role, required for the transposition of the insertion element. This Mycolicibacterium smegmatis (Mycobacterium smegmatis) protein is Transposase for insertion sequence element IS6120.